We begin with the raw amino-acid sequence, 349 residues long: Isopentenyl-diphosphate delta-isomerase (349 aa).

9–10 lines the substrate pocket; it reads RK. Residues 65–67, Ser95, and Asn124 each bind FMN; that span reads AMT. Residue 95–97 participates in substrate binding; sequence STH. Gln154 provides a ligand contact to substrate. A Mg(2+)-binding site is contributed by Glu155. FMN-binding positions include Lys186, Ser211, Thr216, 262–264, and 283–284; these read GLR and SR.

It belongs to the IPP isomerase type 2 family. As to quaternary structure, homooctamer. Dimer of tetramers. FMN is required as a cofactor. It depends on NADPH as a cofactor. Mg(2+) serves as cofactor.

It localises to the cytoplasm. The catalysed reaction is isopentenyl diphosphate = dimethylallyl diphosphate. Involved in the biosynthesis of isoprenoids. Catalyzes the 1,3-allylic rearrangement of the homoallylic substrate isopentenyl (IPP) to its allylic isomer, dimethylallyl diphosphate (DMAPP). In Staphylococcus aureus (strain N315), this protein is Isopentenyl-diphosphate delta-isomerase.